The sequence spans 291 residues: Elongation factor Ts (291 aa).

The tract at residues 79-82 (TDFV) is involved in Mg(2+) ion dislocation from EF-Tu.

The protein belongs to the EF-Ts family.

The protein localises to the cytoplasm. Its function is as follows. Associates with the EF-Tu.GDP complex and induces the exchange of GDP to GTP. It remains bound to the aminoacyl-tRNA.EF-Tu.GTP complex up to the GTP hydrolysis stage on the ribosome. The polypeptide is Elongation factor Ts (Ruegeria sp. (strain TM1040) (Silicibacter sp.)).